A 337-amino-acid chain; its full sequence is Eukaryotic translation initiation factor 3 subunit H (337 aa).

The 133-residue stretch at 21-153 (VQCDGLAVMK…LKAYRLTPQA (133 aa)) folds into the MPN domain.

This sequence belongs to the eIF-3 subunit H family. As to quaternary structure, component of the eukaryotic translation initiation factor 3 (eIF-3) complex. The eIF-3 complex interacts with pix. Interacts with mxt.

The protein localises to the cytoplasm. Component of the eukaryotic translation initiation factor 3 (eIF-3) complex, which is involved in protein synthesis of a specialized repertoire of mRNAs and, together with other initiation factors, stimulates binding of mRNA and methionyl-tRNAi to the 40S ribosome. The eIF-3 complex specifically targets and initiates translation of a subset of mRNAs involved in cell proliferation. The chain is Eukaryotic translation initiation factor 3 subunit H from Drosophila ananassae (Fruit fly).